The primary structure comprises 766 residues: ATP-dependent RNA helicase DBP4 (766 aa).

Positions methionine 1–histidine 18 are enriched in basic residues. Residues methionine 1–threonine 25 are disordered. Residues serine 46–lysine 74 carry the Q motif motif. The 175-residue stretch at isoleucine 77–valine 251 folds into the Helicase ATP-binding domain. Alanine 90 to threonine 97 provides a ligand contact to ATP. The DEAD box signature appears at aspartate 199–aspartate 202. A Helicase C-terminal domain is found at serine 265–cysteine 437. Disordered regions lie at residues lysine 488 to lysine 525, lysine 572 to leucine 614, and asparagine 649 to threonine 752. 5 stretches are compositionally biased toward basic and acidic residues: residues glycine 493–asparagine 502, lysine 572–aspartate 581, isoleucine 660–glutamine 671, lysine 678–glutamate 687, and aspartate 709–lysine 738. The segment covering aspartate 739 to threonine 752 has biased composition (acidic residues).

It belongs to the DEAD box helicase family. DDX10/DBP4 subfamily. Interacts with the U3 and U14 snoRNAs. Associates with pre-ribosomal complexes.

The protein resides in the nucleus. It is found in the nucleolus. The catalysed reaction is ATP + H2O = ADP + phosphate + H(+). Functionally, ATP-dependent RNA helicase required for ribosome biogenesis. Involved in the release of U14 snoRNA in pre-ribosomal complexes. Required for pre-rRNA cleavage at site A2. In Debaryomyces hansenii (strain ATCC 36239 / CBS 767 / BCRC 21394 / JCM 1990 / NBRC 0083 / IGC 2968) (Yeast), this protein is ATP-dependent RNA helicase DBP4 (DBP4).